We begin with the raw amino-acid sequence, 238 residues long: Probable rhamnogalacturonate lyase B (238 aa).

The first 19 residues, 1 to 19, serve as a signal peptide directing secretion; sequence MRLRTSLGVASACASVASA. Residues asparagine 27, asparagine 110, and asparagine 143 are each glycosylated (N-linked (GlcNAc...) asparagine).

The protein belongs to the polysaccharide lyase 4 family.

The protein resides in the secreted. It catalyses the reaction Endotype eliminative cleavage of L-alpha-rhamnopyranosyl-(1-&gt;4)-alpha-D-galactopyranosyluronic acid bonds of rhamnogalacturonan I domains in ramified hairy regions of pectin leaving L-rhamnopyranose at the reducing end and 4-deoxy-4,5-unsaturated D-galactopyranosyluronic acid at the non-reducing end.. Functionally, pectinolytic enzymes consist of four classes of enzymes: pectin lyase, polygalacturonase, pectin methylesterase and rhamnogalacturonase. Degrades the rhamnogalacturonan I (RG-I) backbone of pectin. This is Probable rhamnogalacturonate lyase B (rglB) from Aspergillus oryzae (strain ATCC 42149 / RIB 40) (Yellow koji mold).